The chain runs to 75 residues: ORF2p protein (75 aa).

The important for viral replication in intestinal cells stretch occupies residues 13–18 (WIGHPV). The hydrophobic stretch at 23-45 (IVYLFVGFTPLTLETLHTLNYII) threads the membrane. Residues 53–75 (APRSPHSDPARMRIPTQPRKAPL) are disordered.

It is found in the host cytoplasmic vesicle membrane. Functionally, facilitates virus release from intestinal cells in vitro, possibly through the host autophagic pathway. This is ORF2p protein from Human enterovirus 71 (strain USA/BrCr/1970) (EV71).